Reading from the N-terminus, the 170-residue chain is Translationally-controlled tumor protein homolog (170 aa).

A TCTP domain is found at 1-170 (MIIYKCIISG…FKDGLLAEKC (170 aa)).

It belongs to the TCTP family.

The protein localises to the cytoplasm. In terms of biological role, involved in calcium binding and microtubule stabilization. The sequence is that of Translationally-controlled tumor protein homolog (tpt1) from Lateolabrax japonicus (Japanese sea perch).